The primary structure comprises 383 residues: L-lactate dehydrogenase (383 aa).

The FMN hydroxy acid dehydrogenase domain occupies 1–380 (MIVSSTTDFR…NETILAERVP (380 aa)). Tyr-24 contacts substrate. FMN-binding residues include Ser-106 and Gln-127. Tyr-129 is a substrate binding site. Residue Thr-155 participates in FMN binding. Arg-164 serves as a coordination point for substrate. Residue Lys-251 coordinates FMN. His-275 acts as the Proton acceptor in catalysis. Residue Arg-278 participates in substrate binding. 306–330 (DGGVRSGLDVVRMLALGARGVLIGR) lines the FMN pocket.

It belongs to the FMN-dependent alpha-hydroxy acid dehydrogenase family. FMN is required as a cofactor.

Its subcellular location is the cell inner membrane. The enzyme catalyses (S)-lactate + A = pyruvate + AH2. Functionally, catalyzes the conversion of L-lactate to pyruvate. Is coupled to the respiratory chain. The polypeptide is L-lactate dehydrogenase (Caulobacter vibrioides (strain ATCC 19089 / CIP 103742 / CB 15) (Caulobacter crescentus)).